A 149-amino-acid chain; its full sequence is IQ domain-containing protein F5 (149 aa).

IQ domains are found at residues 12 to 41 (ENKA…RAWI) and 68 to 97 (QEWA…AVRI).

The polypeptide is IQ domain-containing protein F5 (IQCF5) (Bos taurus (Bovine)).